The chain runs to 334 residues: MKIGIDTMGGDNAPSSVIEGVAIYLTQNTQDNVVLFGNKSVIEKECVDRIKDLSRVEIVDCKEKIEFDDEPVKAIRQKKDSSIVVGLKYLKEKQIDAFVSAGSTGALMAGGLLIVGRIKGIDRPALTTKLPYKSGQYLLIDVGSNTDCRPINILQFAQMATVYASKVLGKNNPTVGLLNIGTEETKGNDLSKQSYEILKNAKNINFVGNVEARDLPFSPPDIVVCDGFVGNIVLKLTEGFGLLFFDILKDIAKLSLKAKIGGLLLKPYLKNLKGKYDYKEVGGAPLLGIDGIVIKCHGSSDGQAIFNGINQAKTFYENNVLELLKEEITAESEV.

Belongs to the PlsX family. In terms of assembly, homodimer. Probably interacts with PlsY.

It is found in the cytoplasm. It carries out the reaction a fatty acyl-[ACP] + phosphate = an acyl phosphate + holo-[ACP]. It participates in lipid metabolism; phospholipid metabolism. In terms of biological role, catalyzes the reversible formation of acyl-phosphate (acyl-PO(4)) from acyl-[acyl-carrier-protein] (acyl-ACP). This enzyme utilizes acyl-ACP as fatty acyl donor, but not acyl-CoA. This is Phosphate acyltransferase from Caldicellulosiruptor saccharolyticus (strain ATCC 43494 / DSM 8903 / Tp8T 6331).